The chain runs to 254 residues: PAXIP1-associated glutamate-rich protein 1 (254 aa).

Disordered stretches follow at residues 1–111 (MSLA…PPSE) and 127–254 (LQAE…QRKY). A compositionally biased stretch (basic and acidic residues) spans 45 to 62 (KAEDEGEGGREETEREGS). A compositionally biased stretch (acidic residues) spans 78-98 (EPAEEDSEDWCVPCSDEEVEL). The interval 116-160 (YELLAAHGTLELQAEILPRRPPTPEAQSEEERSDEEPEAKEEEEE) is sufficient for interaction with NCOA1. Threonine 138 carries the phosphothreonine modification. Positions 142 to 159 (QSEEERSDEEPEAKEEEE) are enriched in acidic residues. A phosphoserine mark is found at serine 143 and serine 148. The interval 161 to 254 (KPHMPTEFDF…SSLFPRQRKY (94 aa)) is sufficient for interaction with ESR1. Residues 195-223 (QKREARLDKVLSDMKRHKKLEEQILRTGR) show a composition bias toward basic and acidic residues. At serine 237 the chain carries Phosphoserine.

Component of the KMT2 family MLL2/MLL3 complex (also named ASCOM complex), at least composed of the HMTs KMT2D and/or KMT2C, the common subunits ASH2L, RBBP5, WDR5 and DPY30, and the complex type-specific subunits PAXIP1/PTIP, PAGR1, NCOA6 and KDM6A; PAXIP1 is required for the association with the MLL2/MLL3 complex. Forms a constitutive complex with PAXIP1/PTIP independently of the MLL2/MLL3 complex. Interacts with NCOA1, ESR1, NR3C1, AR. As to expression, ubiquitously expressed.

The protein resides in the nucleus. Functionally, its association with the histone methyltransferase MLL2/MLL3 complex is suggesting a role in epigenetic transcriptional activation. However, in association with PAXIP1/PTIP is proposed to function at least in part independently of the MLL2/MLL3 complex. Proposed to be recruited by PAXIP1 to sites of DNA damage where the PAGR1:PAXIP1 complex is required for cell survival in response to DNA damage independently of the MLL2/MLL3 complex. However, its function in DNA damage has been questioned. During immunoglobulin class switching in activated B-cells is involved in transcription regulation of downstream switch regions at the immunoglobulin heavy-chain (Igh) locus independently of the MLL2/MLL3 complex. Involved in both estrogen receptor-regulated gene transcription and estrogen-stimulated G1/S cell-cycle transition. Acts as a transcriptional cofactor for nuclear hormone receptors. Inhibits the induction properties of several steroid receptors such as NR3C1, AR and PPARG; the mechanism of inhibition appears to be gene-dependent. The sequence is that of PAXIP1-associated glutamate-rich protein 1 (PAGR1) from Homo sapiens (Human).